The sequence spans 155 residues: Small ribosomal subunit protein uS7cz/uS7cy (155 aa).

It belongs to the universal ribosomal protein uS7 family. Part of the 30S ribosomal subunit.

It is found in the plastid. It localises to the chloroplast. Its function is as follows. One of the primary rRNA binding proteins, it binds directly to 16S rRNA where it nucleates assembly of the head domain of the 30S subunit. The polypeptide is Small ribosomal subunit protein uS7cz/uS7cy (rps7-A) (Lactuca sativa (Garden lettuce)).